The following is a 488-amino-acid chain: Probable malate:quinone oxidoreductase (488 aa).

The protein belongs to the MQO family. The cofactor is FAD.

The enzyme catalyses (S)-malate + a quinone = a quinol + oxaloacetate. It functions in the pathway carbohydrate metabolism; tricarboxylic acid cycle; oxaloacetate from (S)-malate (quinone route): step 1/1. The polypeptide is Probable malate:quinone oxidoreductase (Neisseria meningitidis serogroup A / serotype 4A (strain DSM 15465 / Z2491)).